Here is a 920-residue protein sequence, read N- to C-terminus: Protein translocase subunit SecA 2 (920 aa).

ATP is bound by residues Gln91, 109–113 (GEGKT), and Asp527. The span at 859-870 (GEGSALDRRPTD) shows a compositional bias: basic and acidic residues. Residues 859–920 (GEGSALDRRP…KSRNRRRRKR (62 aa)) form a disordered region. Residues 906 to 920 (PHRPGKSRNRRRRKR) are compositionally biased toward basic residues.

It belongs to the SecA family. As to quaternary structure, monomer and homodimer. Part of the essential Sec protein translocation apparatus which comprises SecA, SecYEG and auxiliary proteins SecDF. Other proteins may also be involved.

The protein localises to the cell membrane. It is found in the cytoplasm. It carries out the reaction ATP + H2O + cellular proteinSide 1 = ADP + phosphate + cellular proteinSide 2.. Its function is as follows. Part of the Sec protein translocase complex. Interacts with the SecYEG preprotein conducting channel. Has a central role in coupling the hydrolysis of ATP to the transfer of proteins into and across the cell membrane, serving as an ATP-driven molecular motor driving the stepwise translocation of polypeptide chains across the membrane. This Streptomyces avermitilis (strain ATCC 31267 / DSM 46492 / JCM 5070 / NBRC 14893 / NCIMB 12804 / NRRL 8165 / MA-4680) protein is Protein translocase subunit SecA 2.